A 119-amino-acid chain; its full sequence is Large ribosomal subunit protein bL20 (119 aa).

It belongs to the bacterial ribosomal protein bL20 family.

Its function is as follows. Binds directly to 23S ribosomal RNA and is necessary for the in vitro assembly process of the 50S ribosomal subunit. It is not involved in the protein synthesizing functions of that subunit. This Stenotrophomonas maltophilia (strain R551-3) protein is Large ribosomal subunit protein bL20.